The chain runs to 25 residues: FLGALLKIGAKLLPSVVGLFKKKQQ.

Belongs to the non-disulfide-bridged peptide (NDBP) superfamily. Medium-length antimicrobial peptide (group 3) family. Ponericin-W subfamily. In terms of tissue distribution, expressed by the venom gland.

The protein localises to the secreted. It is found in the target cell membrane. Functionally, membrane-perturbating peptide with multiple activities. It is insecticidal, since it induces reversible paralysis in insects (L.cuprina) after 1 hour, but fails to kill flies. It shows a relatively strong and broad-spectrum antibacterial activity against both Gram-positive and Gram-negative bacteria (MIC&lt;20 uM). It is also anthelmintic, since it potently inhibits the larval development of the major pathogenic nematode of ruminants (H.contortus, IC(50)=2.8 uM). Interestingly, only at 10 uM, it increases adult males motility of the other nematode B.malayi for 24 hours post-treatment, followed by a reduction in motility for the rest of the experiment. It shows cytotoxic activity against HEK293 cells (EC(50)=4-6 uM) and induces hemolysis in human erythrocytes (EC(50)=40-62 uM). In addition, it causes an important increase in intracellular calcium concentration on neuronal and epithelial cell lines, which supports a non-specific membrane perturbation mechanism of action. In vivo, it induces pain by intraplantar injection into mice, suggesting a defensive function against vertebrate predators. The protein is M-poneritoxin-Na1b of Neoponera apicalis (Ant).